Consider the following 359-residue polypeptide: Homoserine dehydrogenase (359 aa).

Residues A13, V15, V16, and A41 each coordinate NAD(+). Position 16 (V16) interacts with NADP(+). Residue V16 coordinates NADPH. NADPH contacts are provided by K60, T93, S94, and K117. T93 is an NAD(+) binding site. T93 provides a ligand contact to NADP(+). K117 lines the NADP(+) pocket. Positions 143, 146, 148, and 150 each coordinate Na(+). Residues G205 and E208 each coordinate NADP(+). L-homoserine is bound by residues E208 and D219. K223 acts as the Proton donor in catalysis. K290 is covalently cross-linked (Glycyl lysine isopeptide (Lys-Gly) (interchain with G-Cter in ubiquitin)). Residue G340 coordinates NAD(+). Position 340 (G340) interacts with NADP(+). G340 serves as a coordination point for NADPH.

It belongs to the homoserine dehydrogenase family. Homodimer. A metal cation is required as a cofactor.

It carries out the reaction L-homoserine + NADP(+) = L-aspartate 4-semialdehyde + NADPH + H(+). The enzyme catalyses L-homoserine + NAD(+) = L-aspartate 4-semialdehyde + NADH + H(+). Its pathway is amino-acid biosynthesis; L-methionine biosynthesis via de novo pathway; L-homoserine from L-aspartate: step 3/3. The protein operates within amino-acid biosynthesis; L-threonine biosynthesis; L-threonine from L-aspartate: step 3/5. Functionally, catalyzes the conversion of L-aspartate-beta-semialdehyde (L-Asa) to L-homoserine (L-Hse), the third step in the biosynthesis of amino acids that derive from aspartate (the aspartate family of amino acids), including methioinine and threonine, the latter of which is a precursor to isoleucine; production of homoserine leads to a branch-point in the pathway as it can either be O-phosphorylated for processing to threonine, or O-acylated for processing to methionine. This is Homoserine dehydrogenase (HOM6) from Saccharomyces cerevisiae (strain ATCC 204508 / S288c) (Baker's yeast).